A 549-amino-acid polypeptide reads, in one-letter code: Glucose-6-phosphate isomerase (549 aa).

Catalysis depends on glutamate 355, which acts as the Proton donor. Catalysis depends on residues histidine 386 and lysine 514.

The protein belongs to the GPI family.

The protein localises to the cytoplasm. The enzyme catalyses alpha-D-glucose 6-phosphate = beta-D-fructose 6-phosphate. It functions in the pathway carbohydrate biosynthesis; gluconeogenesis. It participates in carbohydrate degradation; glycolysis; D-glyceraldehyde 3-phosphate and glycerone phosphate from D-glucose: step 2/4. Functionally, catalyzes the reversible isomerization of glucose-6-phosphate to fructose-6-phosphate. The chain is Glucose-6-phosphate isomerase from Edwardsiella ictaluri (strain 93-146).